The primary structure comprises 277 residues: MSFKKILGVALVSALALTACKEEKKAESTAAPAAQAPAKIKVGVMSGPEHTVAERAAQIAKEKYGLEVEFVLFNDYALPNTAVSKGDLDANAFQHKPYLDKDSQSKGLNNLVIVGNTFVYPLAGYSKKVKNVSELAEGAVIAVPNDPSNLARALILLEKQGLIKLKDNTNLFSTSVDIIENPKNLKIKEVDTSIAAKALDDVDLAVVNNTYAGQVGLNTQDHGVFVESKDSPYVNIIVARQDNKDAANVQNFIKSYQTEEVYQEAQKHFKDGVVKGW.

The N-terminal stretch at 1-19 (MSFKKILGVALVSALALTA) is a signal peptide. C20 carries the N-palmitoyl cysteine lipid modification. The S-diacylglycerol cysteine moiety is linked to residue C20.

It belongs to the NlpA lipoprotein family.

The protein localises to the cell outer membrane. This chain is Outer membrane lipoprotein 1 (plpA), found in Mannheimia haemolytica (Pasteurella haemolytica).